We begin with the raw amino-acid sequence, 398 residues long: Leucine aminopeptidase 1 (398 aa).

The first 20 residues, 1 to 20 (MKFLQTSLIAAALPAALVSG), serve as a signal peptide directing secretion. Residues 21–87 (RFVIENEGDN…LRAWTQSQAS (67 aa)) constitute a propeptide that is removed on maturation. Asparagine 179 carries N-linked (GlcNAc...) asparagine glycosylation. Zn(2+) is bound by residues histidine 187, aspartate 206, glutamate 245, and aspartate 272. Cysteine 321 and cysteine 325 are disulfide-bonded. Histidine 354 lines the Zn(2+) pocket.

Belongs to the peptidase M28 family. M28E subfamily. Monomer. The cofactor is Zn(2+).

The protein localises to the secreted. Functionally, extracellular aminopeptidase that allows assimilation of proteinaceous substrates. The chain is Leucine aminopeptidase 1 (lap1) from Trichoderma harzianum (Hypocrea lixii).